Here is a 205-residue protein sequence, read N- to C-terminus: GTP-binding protein rho3 (205 aa).

Glycine 20–threonine 27 contacts GTP. The Effector region motif lies at tyrosine 42–tyrosine 50. Residues aspartate 67 to glutamine 71 and leucine 125 to aspartate 128 each bind GTP. Cysteine 202 is modified (cysteine methyl ester). Cysteine 202 is lipidated: S-geranylgeranyl cysteine. Residues isoleucine 203–alanine 205 constitute a propeptide, removed in mature form.

The protein belongs to the small GTPase superfamily. Rho family. Interacts with for3. Post-translationally, palmitoylated by the erf2-erf4 complex.

Its subcellular location is the cell membrane. Involved in controlling cell shape and septation. Regulates cell separation by modulating the function of the exocyst complex. Involved in post-Golgi vesicle transport. Involved in driving sexual development in a palmitoylation-dependent manner. The sequence is that of GTP-binding protein rho3 (rho3) from Schizosaccharomyces pombe (strain 972 / ATCC 24843) (Fission yeast).